The following is a 336-amino-acid chain: GTPase Obg (336 aa).

Residues 1–159 (MKFIDEATII…RRLQLELILL (159 aa)) enclose the Obg domain. Positions 160–333 (ADVGLLGLPN…LCRDIMLFIN (174 aa)) constitute an OBG-type G domain. GTP is bound by residues 166 to 173 (GLPNVGKS), 191 to 195 (FTTLV), 213 to 216 (DIPG), 283 to 286 (NKLD), and 314 to 316 (SAM). Residues serine 173 and threonine 193 each coordinate Mg(2+).

The protein belongs to the TRAFAC class OBG-HflX-like GTPase superfamily. OBG GTPase family. Monomer. Mg(2+) is required as a cofactor.

The protein localises to the cytoplasm. In terms of biological role, an essential GTPase which binds GTP, GDP and possibly (p)ppGpp with moderate affinity, with high nucleotide exchange rates and a fairly low GTP hydrolysis rate. Plays a role in control of the cell cycle, stress response, ribosome biogenesis and in those bacteria that undergo differentiation, in morphogenesis control. In Baumannia cicadellinicola subsp. Homalodisca coagulata, this protein is GTPase Obg.